We begin with the raw amino-acid sequence, 451 residues long: Eukaryotic translation initiation factor 3 subunit E (451 aa).

Positions 245–425 (PFFNHEPARD…GTVVMNHPPS (181 aa)) constitute a PCI domain.

Belongs to the eIF-3 subunit E family. Component of the eukaryotic translation initiation factor 3 (eIF-3) complex.

It is found in the cytoplasm. In terms of biological role, component of the eukaryotic translation initiation factor 3 (eIF-3) complex, which is involved in protein synthesis of a specialized repertoire of mRNAs and, together with other initiation factors, stimulates binding of mRNA and methionyl-tRNAi to the 40S ribosome. The eIF-3 complex specifically targets and initiates translation of a subset of mRNAs involved in cell proliferation. In Sclerotinia sclerotiorum (strain ATCC 18683 / 1980 / Ss-1) (White mold), this protein is Eukaryotic translation initiation factor 3 subunit E (int6).